We begin with the raw amino-acid sequence, 374 residues long: Queuine tRNA-ribosyltransferase (374 aa).

Aspartate 94 serves as the catalytic Proton acceptor. Substrate is bound by residues 94–98 (DSGGF), aspartate 148, glutamine 191, and glycine 218. The segment at 249-255 (GVGSPDY) is RNA binding. The active-site Nucleophile is the aspartate 268. Positions 273-277 (TRIGR) are RNA binding; important for wobble base 34 recognition. Zn(2+) contacts are provided by cysteine 306, cysteine 308, cysteine 311, and histidine 337.

It belongs to the queuine tRNA-ribosyltransferase family. In terms of assembly, homodimer. Within each dimer, one monomer is responsible for RNA recognition and catalysis, while the other monomer binds to the replacement base PreQ1. It depends on Zn(2+) as a cofactor.

It carries out the reaction 7-aminomethyl-7-carbaguanine + guanosine(34) in tRNA = 7-aminomethyl-7-carbaguanosine(34) in tRNA + guanine. It participates in tRNA modification; tRNA-queuosine biosynthesis. Functionally, catalyzes the base-exchange of a guanine (G) residue with the queuine precursor 7-aminomethyl-7-deazaguanine (PreQ1) at position 34 (anticodon wobble position) in tRNAs with GU(N) anticodons (tRNA-Asp, -Asn, -His and -Tyr). Catalysis occurs through a double-displacement mechanism. The nucleophile active site attacks the C1' of nucleotide 34 to detach the guanine base from the RNA, forming a covalent enzyme-RNA intermediate. The proton acceptor active site deprotonates the incoming PreQ1, allowing a nucleophilic attack on the C1' of the ribose to form the product. After dissociation, two additional enzymatic reactions on the tRNA convert PreQ1 to queuine (Q), resulting in the hypermodified nucleoside queuosine (7-(((4,5-cis-dihydroxy-2-cyclopenten-1-yl)amino)methyl)-7-deazaguanosine). The polypeptide is Queuine tRNA-ribosyltransferase (Acetivibrio thermocellus (strain ATCC 27405 / DSM 1237 / JCM 9322 / NBRC 103400 / NCIMB 10682 / NRRL B-4536 / VPI 7372) (Clostridium thermocellum)).